Reading from the N-terminus, the 184-residue chain is MSWRSESIWIEFITGSRKTSNFCWAFILFLGSLGFLLVGTSSYLGRNVISLFPSQEIIFFPQGIVMSFYGIAGLFISCYLWCTILWNVGSGYDLFDRKEGIVRIFRWGFPGKSRRIFLRFFMKDIQSIRIEVKEGVSARRVLYMEIRGQGAIPLIRTDENFTTREIEQKAAELAYFLRVPIEVF.

The next 2 helical transmembrane spans lie at 22–42 and 57–77; these read FCWAFILFLGSLGFLLVGTSS and IIFFPQGIVMSFYGIAGLFIS.

This sequence belongs to the Ycf4 family.

It is found in the plastid. The protein localises to the chloroplast thylakoid membrane. Functionally, seems to be required for the assembly of the photosystem I complex. This chain is Photosystem I assembly protein Ycf4, found in Olimarabidopsis pumila (Dwarf rocket).